Consider the following 179-residue polypeptide: Large ribosomal subunit protein uL5 (179 aa).

The protein belongs to the universal ribosomal protein uL5 family. In terms of assembly, part of the 50S ribosomal subunit; part of the 5S rRNA/L5/L18/L25 subcomplex. Contacts the 5S rRNA and the P site tRNA. Forms a bridge to the 30S subunit in the 70S ribosome.

Functionally, this is one of the proteins that bind and probably mediate the attachment of the 5S RNA into the large ribosomal subunit, where it forms part of the central protuberance. In the 70S ribosome it contacts protein S13 of the 30S subunit (bridge B1b), connecting the 2 subunits; this bridge is implicated in subunit movement. Contacts the P site tRNA; the 5S rRNA and some of its associated proteins might help stabilize positioning of ribosome-bound tRNAs. In Prochlorococcus marinus (strain MIT 9215), this protein is Large ribosomal subunit protein uL5.